The sequence spans 121 residues: Large ribosomal subunit protein uL18 (121 aa).

Belongs to the universal ribosomal protein uL18 family. As to quaternary structure, part of the 50S ribosomal subunit; part of the 5S rRNA/L5/L18/L25 subcomplex. Contacts the 5S and 23S rRNAs.

Functionally, this is one of the proteins that bind and probably mediate the attachment of the 5S RNA into the large ribosomal subunit, where it forms part of the central protuberance. This chain is Large ribosomal subunit protein uL18, found in Delftia acidovorans (strain DSM 14801 / SPH-1).